Reading from the N-terminus, the 339-residue chain is Tetraacyldisaccharide 4'-kinase (339 aa).

Residue 58–65 (NVGGVGKT) participates in ATP binding.

It belongs to the LpxK family.

It catalyses the reaction a lipid A disaccharide + ATP = a lipid IVA + ADP + H(+). Its pathway is glycolipid biosynthesis; lipid IV(A) biosynthesis; lipid IV(A) from (3R)-3-hydroxytetradecanoyl-[acyl-carrier-protein] and UDP-N-acetyl-alpha-D-glucosamine: step 6/6. Transfers the gamma-phosphate of ATP to the 4'-position of a tetraacyldisaccharide 1-phosphate intermediate (termed DS-1-P) to form tetraacyldisaccharide 1,4'-bis-phosphate (lipid IVA). In Chromobacterium violaceum (strain ATCC 12472 / DSM 30191 / JCM 1249 / CCUG 213 / NBRC 12614 / NCIMB 9131 / NCTC 9757 / MK), this protein is Tetraacyldisaccharide 4'-kinase.